The primary structure comprises 151 residues: PTITNDGVSIAKEIELEDPYEKIGAELVKEVAKKTDDVAGDGTTTATVLAQALVKEGLRNVAAGANPLGLKRGIEKAVEKVTETLLKSAKEVETKEQIAATAAISAGDQSIGDLIAEAMDKVGNEGVITVEESNTFGLQLELTEGMRFDKG.

41–45 provides a ligand contact to ATP; it reads DGTTT.

The protein belongs to the chaperonin (HSP60) family. Forms a cylinder of 14 subunits composed of two heptameric rings stacked back-to-back. Interacts with the co-chaperonin GroES.

It localises to the cytoplasm. It carries out the reaction ATP + H2O + a folded polypeptide = ADP + phosphate + an unfolded polypeptide.. Together with its co-chaperonin GroES, plays an essential role in assisting protein folding. The GroEL-GroES system forms a nano-cage that allows encapsulation of the non-native substrate proteins and provides a physical environment optimized to promote and accelerate protein folding. In Mycobacterium marinum, this protein is Chaperonin GroEL.